A 367-amino-acid chain; its full sequence is 3-dehydroquinate synthase (367 aa).

Residues 112 to 116 (GVIGD), 136 to 137 (TT), Lys149, Lys158, and 176 to 179 (TLKT) contribute to the NAD(+) site. Positions 191, 256, and 273 each coordinate Zn(2+).

Belongs to the sugar phosphate cyclases superfamily. Dehydroquinate synthase family. NAD(+) serves as cofactor. The cofactor is Co(2+). Requires Zn(2+) as cofactor.

It is found in the cytoplasm. The catalysed reaction is 7-phospho-2-dehydro-3-deoxy-D-arabino-heptonate = 3-dehydroquinate + phosphate. It functions in the pathway metabolic intermediate biosynthesis; chorismate biosynthesis; chorismate from D-erythrose 4-phosphate and phosphoenolpyruvate: step 2/7. Its function is as follows. Catalyzes the conversion of 3-deoxy-D-arabino-heptulosonate 7-phosphate (DAHP) to dehydroquinate (DHQ). This is 3-dehydroquinate synthase from Prochlorococcus marinus (strain SARG / CCMP1375 / SS120).